The sequence spans 197 residues: Imidazoleglycerol-phosphate dehydratase (197 aa).

The protein belongs to the imidazoleglycerol-phosphate dehydratase family.

The protein resides in the cytoplasm. It catalyses the reaction D-erythro-1-(imidazol-4-yl)glycerol 3-phosphate = 3-(imidazol-4-yl)-2-oxopropyl phosphate + H2O. It functions in the pathway amino-acid biosynthesis; L-histidine biosynthesis; L-histidine from 5-phospho-alpha-D-ribose 1-diphosphate: step 6/9. The chain is Imidazoleglycerol-phosphate dehydratase from Marinomonas sp. (strain MWYL1).